We begin with the raw amino-acid sequence, 663 residues long: Oxytetracycline resistance protein (663 aa).

The tr-type G domain occupies 1-252; that stretch reads MNKLNLGILA…GIRELLPSVH (252 aa). GTP-binding positions include 10-17, 74-78, and 128-131; these read AHVDAGKT, DTPGH, and NKID.

This sequence belongs to the TRAFAC class translation factor GTPase superfamily. Classic translation factor GTPase family. TetM/TetO subfamily.

Abolishes the inhibitory effect of oxytetracycline on protein synthesis by a non-covalent modification of the ribosomes. The chain is Oxytetracycline resistance protein (otrA) from Streptomyces rimosus.